The primary structure comprises 260 residues: Type III pantothenate kinase (260 aa).

An ATP-binding site is contributed by 6 to 13 (DAGNTRIK). Substrate-binding positions include Tyr100 and 107-110 (GADR). Asp109 functions as the Proton acceptor in the catalytic mechanism. Thr133 lines the ATP pocket. A substrate-binding site is contributed by Thr186.

The protein belongs to the type III pantothenate kinase family. Homodimer. NH4(+) serves as cofactor. Requires K(+) as cofactor.

Its subcellular location is the cytoplasm. It catalyses the reaction (R)-pantothenate + ATP = (R)-4'-phosphopantothenate + ADP + H(+). The protein operates within cofactor biosynthesis; coenzyme A biosynthesis; CoA from (R)-pantothenate: step 1/5. Its function is as follows. Catalyzes the phosphorylation of pantothenate (Pan), the first step in CoA biosynthesis. The polypeptide is Type III pantothenate kinase (Janthinobacterium sp. (strain Marseille) (Minibacterium massiliensis)).